A 350-amino-acid chain; its full sequence is Protein-glutamate methylesterase/protein-glutamine glutaminase (350 aa).

The region spanning 5–122 (KVLCVDDSAL…RDGLIEYSEV (118 aa)) is the Response regulatory domain. Residue Asp56 is modified to 4-aspartylphosphate. A CheB-type methylesterase domain is found at 152 to 346 (PFASSEKLVI…ERILTRLGDR (195 aa)). Residues Ser165, His191, and Asp288 contribute to the active site.

It belongs to the CheB family. Phosphorylated by CheA. Phosphorylation of the N-terminal regulatory domain activates the methylesterase activity.

Its subcellular location is the cytoplasm. It catalyses the reaction [protein]-L-glutamate 5-O-methyl ester + H2O = L-glutamyl-[protein] + methanol + H(+). The enzyme catalyses L-glutaminyl-[protein] + H2O = L-glutamyl-[protein] + NH4(+). Involved in chemotaxis. Part of a chemotaxis signal transduction system that modulates chemotaxis in response to various stimuli. Catalyzes the demethylation of specific methylglutamate residues introduced into the chemoreceptors (methyl-accepting chemotaxis proteins or MCP) by CheR. Also mediates the irreversible deamidation of specific glutamine residues to glutamic acid. The protein is Protein-glutamate methylesterase/protein-glutamine glutaminase of Bordetella pertussis (strain Tohama I / ATCC BAA-589 / NCTC 13251).